The following is a 483-amino-acid chain: tRNA sulfurtransferase (483 aa).

The 105-residue stretch at 62-166 (PQICDALTRV…QDKLTLIKAR (105 aa)) folds into the THUMP domain. Residues 184–185 (LI), lysine 266, glycine 288, and glutamine 297 each bind ATP. Cysteine 345 and cysteine 457 are oxidised to a cystine. Residues 405-483 (LADTDVLLDI…GYTNVKVYRP (79 aa)) form the Rhodanese domain. The active-site Cysteine persulfide intermediate is the cysteine 457.

The protein belongs to the ThiI family.

The protein localises to the cytoplasm. The enzyme catalyses [ThiI sulfur-carrier protein]-S-sulfanyl-L-cysteine + a uridine in tRNA + 2 reduced [2Fe-2S]-[ferredoxin] + ATP + H(+) = [ThiI sulfur-carrier protein]-L-cysteine + a 4-thiouridine in tRNA + 2 oxidized [2Fe-2S]-[ferredoxin] + AMP + diphosphate. It carries out the reaction [ThiS sulfur-carrier protein]-C-terminal Gly-Gly-AMP + S-sulfanyl-L-cysteinyl-[cysteine desulfurase] + AH2 = [ThiS sulfur-carrier protein]-C-terminal-Gly-aminoethanethioate + L-cysteinyl-[cysteine desulfurase] + A + AMP + 2 H(+). Its pathway is cofactor biosynthesis; thiamine diphosphate biosynthesis. Catalyzes the ATP-dependent transfer of a sulfur to tRNA to produce 4-thiouridine in position 8 of tRNAs, which functions as a near-UV photosensor. Also catalyzes the transfer of sulfur to the sulfur carrier protein ThiS, forming ThiS-thiocarboxylate. This is a step in the synthesis of thiazole, in the thiamine biosynthesis pathway. The sulfur is donated as persulfide by IscS. The polypeptide is tRNA sulfurtransferase (Yersinia enterocolitica serotype O:8 / biotype 1B (strain NCTC 13174 / 8081)).